The primary structure comprises 145 residues: MNGRVDYLVTEEEINLTRGPSGLGFNIVGGTDQQYVSNDSGIYVSRIKENGAAALDGRLQEGDKILSVNGQDLKNLLHQDAVDLFRNAGYAVSLRVQHRLQVQNGPIGHRGEGDPSGIPIFMVLVPVFALTMVAAWAFMRYRQQL.

The Cytoplasmic segment spans residues 1–117 (MNGRVDYLVT…GHRGEGDPSG (117 aa)). The 88-residue stretch at 13-100 (EINLTRGPSG…AVSLRVQHRL (88 aa)) folds into the PDZ domain. Residues 118 to 138 (IPIFMVLVPVFALTMVAAWAF) form a helical membrane-spanning segment. Topologically, residues 139–145 (MRYRQQL) are mitochondrial intermembrane.

Binds (via the PDZ domain) to isoform 2A of SYNJ2 (via the unique motif in the C-terminus). Interacts (via C-terminus) with RALBP1. Interacts (via PDZ domain) with ACVR2A (via C-terminus) and ACVR2B (via C-terminus). Forms a ternary complex with ACVR2A and RALBP1. Interacts with MAPK12. Interacts with DLL1; enhances DLL1 protein stability, and promotes notch signaling in endothelial cells.

The protein resides in the mitochondrion outer membrane. In terms of biological role, regulates endocytosis of activin type 2 receptor kinases through the Ral/RALBP1-dependent pathway and may be involved in suppression of activin-induced signal transduction. The protein is Synaptojanin-2-binding protein (SYNJ2BP) of Homo sapiens (Human).